Consider the following 290-residue polypeptide: Membrane protein insertase YidC 2 (290 aa).

An N-terminal signal peptide occupies residues 1–19 (MKKKALLPLFLGIMIFLAG). Cys-20 carries N-palmitoyl cysteine lipidation. Cys-20 is lipidated: S-diacylglycerol cysteine. The next 5 helical transmembrane spans lie at 56-76 (FGLAIIVLVLFIRLILLPFML), 134-154 (MLGCLPILIQMPIIMGLYFVL), 176-196 (PDIWITVIAGVLYFIQAVVSS), 211-231 (MVISPIMIIWISLQASSALGL), and 232-252 (YWSVSALFLVIQTHFANIYYS). The tract at residues 266-290 (YEREHNPSSKKKGKNTQVVSKKNKK) is disordered. Residues 280–290 (NTQVVSKKNKK) are compositionally biased toward polar residues.

It belongs to the OXA1/ALB3/YidC family. Type 2 subfamily.

Its subcellular location is the cell membrane. Its function is as follows. Required for the insertion and/or proper folding and/or complex formation of integral membrane proteins into the membrane. Involved in integration of membrane proteins that insert both dependently and independently of the Sec translocase complex, as well as at least some lipoproteins. In Staphylococcus epidermidis (strain ATCC 35984 / DSM 28319 / BCRC 17069 / CCUG 31568 / BM 3577 / RP62A), this protein is Membrane protein insertase YidC 2.